The primary structure comprises 107 residues: Cell division protein FtsB (107 aa).

The Cytoplasmic segment spans residues Met-1–Lys-3. Residues Leu-4–Leu-21 traverse the membrane as a helical segment. The Periplasmic segment spans residues Gly-22–Gln-107. A coiled-coil region spans residues Gln-39–Gly-62.

This sequence belongs to the FtsB family. As to quaternary structure, part of a complex composed of FtsB, FtsL and FtsQ.

It is found in the cell inner membrane. In terms of biological role, essential cell division protein. May link together the upstream cell division proteins, which are predominantly cytoplasmic, with the downstream cell division proteins, which are predominantly periplasmic. The polypeptide is Cell division protein FtsB (Yersinia enterocolitica serotype O:8 / biotype 1B (strain NCTC 13174 / 8081)).